Here is a 285-residue protein sequence, read N- to C-terminus: Vacuolar protein sorting-associated protein 37B (285 aa).

Residues 50–170 are interaction with IST1; the sequence is ASNRSLAEGN…EMVLKGQRLP (121 aa). The 90-residue stretch at 84-173 folds into the VPS37 C-terminal domain; it reads FEAYQIKKTK…LKGQRLPQAL (90 aa). Positions 175–201 are disordered; the sequence is PLPPRLPELAPTAPLPYPAPEASGPPA. At Arg218 the chain carries Omega-N-methylarginine. Residues 230-285 form a disordered region; that stretch reads GQAVPYPGLQCPPLPPRVGLPTQQGFSSQFVSPYPPPLPQRPPPRLPPHQPGFILQ. Over residues 250–260 the composition is skewed to polar residues; the sequence is PTQQGFSSQFV. Residues 262 to 279 are compositionally biased toward pro residues; sequence PYPPPLPQRPPPRLPPHQ.

The protein belongs to the VPS37 family. Component of the ESCRT-I complex (endosomal sorting complex required for transport I) which consists of TSG101, VPS28, a VPS37 protein (VPS37A to -D) and MVB12A or MVB12B in a 1:1:1:1 stoichiometry. Interacts with TSG101, VPS28, MVB12A and MVB12B. Component of the ESCRT-I complex (endosomal sorting complex required for transport I) which consists of TSG101, VPS28, a VPS37 protein (VPS37A to -D) and UBAP1 in a 1:1:1:1 stoichiometry. Interacts with CEP55. Interacts with IST1. In terms of tissue distribution, widely expressed. Expressed in macrophages and lymphocytes.

The protein resides in the late endosome membrane. Component of the ESCRT-I complex, a regulator of vesicular trafficking process. Required for the sorting of endocytic ubiquitinated cargos into multivesicular bodies. May be involved in cell growth and differentiation. The sequence is that of Vacuolar protein sorting-associated protein 37B (VPS37B) from Homo sapiens (Human).